We begin with the raw amino-acid sequence, 2197 residues long: MSNSTRDYPISAAFFCPQSRAPPAEYLHALYSFLSQNTLGKAFLRHIASLDEVWPIFSEARDDILRLPDARQNINVLVDWAKGGSSTPIAEARSGVIALPSVFIVQLGQYFRYLEANRLSHGDFIGQLKDIGGVHGYCGGAAAALSVACAADETQLIDHAAVLLRLFVGIGCCIEAVDDWTTTESTVIACRLKYEGQGDELCSRFPEPKSISITGNARTLSELFDYAVGLGLPTHKMEITGKAHNPENAELAKDFINLYRRTPALQLPPTFKLQATVRSNRTAEKLTNEGIIEDMITMIIASQCDWNTLLTRVAEDMKVSGRPFHKMVSFGMNDCVPVTPFNRQRLKTTKFEAHVLIEPLKPSRISAAQYPTFSDDAIAITGASLRLPGANNLDELWDLISKGTDCHREIPKDRFDPHNIYRTSQSGFSKAQKYFGNFLEDIKGFDRAYFSMGVREAANIDPQQRLLLELAVEALEASGYLANHVREAGDPVGCFVGASFIEYLENTGAHPPTAYTAPGTIRAFLCGRLSYYFGWTAPAEVIDTACSASMVAINRAVKSIQAGECEMALAGGVNLITGMNNYLDLAKAGFLSPTGQCKPFDQSGDGYCRSDGAGFVVLKKLSQALVNGDPIMGVIPSIETNQGGLSGSLTVPSSTALQALYKRVLSKSGLEPAQITYVEAHGTGTQAGDPIEVESVRAVLGDPTRAHSLSLGSVKGNIGHCETGAGVAGLLKVLAMIKHGGIPPLASHKALNPKIPALETHHMEIAKQLKPWDVPLRAAFVNSYGAAGSNAAVICVEPPPVVTDGSSLIGTEPQKVTLPVIVSGATRKSLVLNARALASYLSQDGSHLSIHDVAFTVNQRRKRNRFCAEVSGTDLPSLVQSLRAVDSPSFESPGKSKPVVLVFSGQNTNAVALDRTIYDTYPVFKAYIDACDSEIVKLGFPSIMEAIFQKEPISTAVALQGSIFAMQYACARSWIDAGLKPRAIIGHSFGELTALAVSGALSLADSLKLVTCRGHLIDTKWGEERGGMLVIHADVATVERFQSRFKAQHDGAELEIACYNSPTTTVVAGPVAYMDAAEQMLATDPDFQGLRKLRIVTSNAFHSSLSDPILADLDSMADTLTWNEPSIPLEACTSEGLASIKEWSASRHTRGSVYFTKAVERIEGRLGACIWVEAGLDSAIIAMARKASSKPDSQVFQSVSTKAGATSFIDGIVNNLWRQGVPLSHLNALSATVKPNPVWLPPYQFEREQHWTEHIDRATEASQASTTSDTIQSTPTQTVQSPPKLISRLASLQYQINTQCERFQKITEGHAVLYEPLCPASLYMECVVMALQELAGDLGSRTLDFENLDFHAGLGLQTDRRVLLDLEEARPHSWTFKVQSTKAGSSRSLLHCSGRVILTESSVPTTFQRLVDGPRSRLDQDKDAEKLMSSRAYGLFSNIMTYSEFLKPISSIILRENESLATIKLPPNQPGLHESTAWKRCDAVFLDGFISSSGLLLNSSSVVQSGHVLIAVGVERAILTAAFQASLASSWQAYATFTMVGETHALCDVFACTPDGEVVAMMTGVRFNKMEISKLAKSLSSVNASSPTGGRTQPPAAPKTQAQPMASRPSPTPLQVSFATAEPAAPEPVQQSTAALARNDIGPVLKSLISNYTGLIEEDVSEDSPLVDLGLDSLSSVEFASEIGTKFGVTLDADTVGDLTLHSLCQRLSGTSNVVSQKMSETPAAAPVKELIETVPSPIVTFSSPVSNSITSVLKSLLGSYTGLQEEDMPDDVPLIDLGLDSLSSVEFASELNDKMGADIDSAVVADMTLSALEQQLGASATPPSTTGSSTPGDISTAATTPYATGASTPDYLVHGNKPSISNGVVAAKDSYQVKTVEYKRVSGVPIHADIYVPLVQRVSPMPLALMIHGGGHMTLSRKAVRPTQAKYLLSHGFLPISIDYRLCPEVNLIDGPIADVRDAYVWACQNLGTHLAEHSISVDGGRVVVVGWSTGGHLAMSLGWSLEEAGVPPPKAVLSFYAPVDFESGELDNQKNPALPKPRMTLDQITKALPRTPVTQYGASSTDETNLGWLHPGDPRSELLLHVFHSDIGLPLILHGLPISGSGRPSPSLVASISPLARLRNGSYTIPTFIIHGTKDVIAPYAAAERFVKIMSEKGVKSGFLSLSGTGHVFDVTMKPDSKGWEDKVKPGLDFLIQNA.

Residues 14–253 form an N-terminal acylcarrier protein transacylase domain (SAT) region; it reads FFCPQSRAPP…HNPENAELAK (240 aa). One can recognise a Ketosynthase family 3 (KS3) domain in the interval 375–797; that stretch reads DDAIAITGAS…GSNAAVICVE (423 aa). Residues C546, H681, and H720 each act as for beta-ketoacyl synthase activity in the active site. Positions 901 to 1198 are malonyl-CoA:ACP transacylase (MAT) domain; sequence LVFSGQNTNA…SKPDSQVFQS (298 aa). S988 functions as the For acyl/malonyl transferase activity in the catalytic mechanism. The segment at 1258-1282 is disordered; it reads ATEASQASTTSDTIQSTPTQTVQSP. The segment covering 1260-1281 has biased composition (polar residues); that stretch reads EASQASTTSDTIQSTPTQTVQS. The N-terminal hotdog fold stretch occupies residues 1276 to 1403; the sequence is TQTVQSPPKL…GRVILTESSV (128 aa). The region spanning 1276–1576 is the PKS/mFAS DH domain; the sequence is TQTVQSPPKL…FNKMEISKLA (301 aa). A product template (PT) domain region spans residues 1284–1575; the sequence is KLISRLASLQ…RFNKMEISKL (292 aa). Catalysis depends on H1310, which acts as the Proton acceptor; for dehydratase activity. The tract at residues 1424 to 1576 is C-terminal hotdog fold; the sequence is AEKLMSSRAY…FNKMEISKLA (153 aa). D1487 (proton donor; for dehydratase activity) is an active-site residue. Residues 1581–1591 show a composition bias toward polar residues; sequence SVNASSPTGGR. The tract at residues 1581–1614 is disordered; it reads SVNASSPTGGRTQPPAAPKTQAQPMASRPSPTPL. Carrier domains follow at residues 1639-1719 and 1748-1824; these read NDIG…SQKM and NSIT…ATPP. An O-(pantetheine 4'-phosphoryl)serine mark is found at S1673 and S1782. The segment at 1817 to 1841 is disordered; the sequence is LGASATPPSTTGSSTPGDISTAATT. The span at 1818-1833 shows a compositional bias: low complexity; it reads GASATPPSTTGSSTPG. Residues 1870 to 2197 form a thioesterase (TE) domain region; sequence DSYQVKTVEY…PGLDFLIQNA (328 aa). Residues S1990 and D2137 each act as for thioesterase activity in the active site.

Pantetheine 4'-phosphate is required as a cofactor.

The catalysed reaction is 6 malonyl-CoA + 2 acetyl-CoA + 5 H(+) = o-orsellinate depside + 6 CO2 + 8 CoA + H2O. Functionally, non-reducing polyketide synthase; part of a gene cluster that mediates the biosynthesis of a yet unidentified natural product. The first step in the pathway is performed by Preu6 that condenses 2 acetyl-CoA starter units with 6 malonyl-CoA units to produce lecanoric acid (LA), also known as orsellinate depside, an intermediate that has significant antifungal activity against the plant pathogen Botryosphaeria berengeriana. The biosynthesis probably occurs via the formation of 2 orsellinate intermediates fused together by the C-terminal thioesterase (TE) domain that finally releases lecanoric acid. In Preussia isomera (Coprophilous fungus), this protein is Non-reducing polyketide synthase Preu6.